We begin with the raw amino-acid sequence, 141 residues long: MRLLLALFFVLALVSPSFTQVWSNCGTAADKFQITNVVLDPPTPVKGQDITISASGILDETVTGGNVAVKVKYGFITLINENVSICSSQDPLACPIAAGDYQKNMTEMIPSDAPSGKYTGNVVITDQNNAEIACIDVDINL.

The signal sequence occupies residues 1 to 19 (MRLLLALFFVLALVSPSFT). 2 N-linked (GlcNAc...) asparagine glycosylation sites follow: asparagine 82 and asparagine 104.

Belongs to the NPC2 family. As to quaternary structure, monomer.

In terms of biological role, catalyzes the intermembrane transfer of phosphatidylglycerol and phosphatidylinositol. The chain is Putative phosphatidylglycerol/phosphatidylinositol transfer protein DDB_G0278295 from Dictyostelium discoideum (Social amoeba).